The sequence spans 622 residues: Low affinity potassium transport system protein Kup (622 aa).

12 helical membrane-spanning segments follow: residues 9-29, 49-69, 101-121, 137-157, 163-183, 213-233, 247-267, 276-296, 337-357, 363-383, 395-415, and 419-439; these read LPAL…TSPL, VFGF…IKYI, VLVI…VITP, PQLD…LFVI, GMVG…LAVL, VSFI…ALYA, WFSV…ALLL, PFFL…ATLA, IYIP…IVSF, LAAA…ILSA, LFVG…FSAN, and IVSG…VMTT.

The protein belongs to the HAK/KUP transporter (TC 2.A.72) family.

Its subcellular location is the cell inner membrane. It carries out the reaction K(+)(in) + H(+)(in) = K(+)(out) + H(+)(out). Responsible for the low-affinity transport of potassium into the cell. Likely operates as a K(+):H(+) symporter. The sequence is that of Low affinity potassium transport system protein Kup from Klebsiella pneumoniae subsp. pneumoniae (strain ATCC 700721 / MGH 78578).